The chain runs to 672 residues: MSDIDALQALTSQMTQEGIRRLLVISGDAAWCRKRAEAIRAALPGDWLWVAPDAPAQPCCTPQALQTLLGREFRHAIFDAWQGFDAAAFAALSGTLQAGSWLLLLMPPYETWESRPDTDSLRWSDCAQPIPTPQFAQHLKRTLSRDPQTLLWRQRQPFCWPSYPSRECWRPATGEPQPEQAAILSRLREMPPGVATVIAPRGRGKSALAGQFISRMAGTAIVTAPAKTATDILAAFAGERFCFMAPDALLASGARADWLVVDEAAAIPTPLLLQLVSRFPRILLTTTVQGYEGTGRGFLLKFCARFPQLHRFTLRQPVRWAPECPLENIVSEALIFDDEAFAQAPHGAIEISAFYQQAWVNTPALPRAVYQLLSGAHYRTSPLDLRRMMDAPGQHFLQATANNRVAGALWLVEEGGLSAELSQAVWCGFRRPRGNLVAQSLAAHGSDPLAATLVGRRVSRIAVHPARQREGIGQQLIACACMQAAQCDYLSVSFGYTPKLWRFWQRCGFVLVRMGNHREASSGCYTAMALLPLSDAGKRLAQQEHRRLRRDADILTQWNGEAIPLAALREQALNDEDWRELVGFAFAHRPLLTSLGCLHRLLQYSALPLPALRGRLEEKASDAELCARLRISGRKALLALQRAQAAQALIALDAGRTQSLRDVMPGGGDHAG.

ATP-binding positions include Gln180, 202-211, and Arg319; that span reads GRGKSALAGQ. One can recognise an N-acetyltransferase domain in the interval 349-531; the sequence is IEISAFYQQA…SGCYTAMALL (183 aa). Acetyl-CoA is bound by residues 461-463, 468-474, and Arg506; these read IAV and QREGIGQ.

Belongs to the RNA cytidine acetyltransferase family. TmcA subfamily.

The protein localises to the cytoplasm. It catalyses the reaction cytidine(34) in elongator tRNA(Met) + acetyl-CoA + ATP + H2O = N(4)-acetylcytidine(34) in elongator tRNA(Met) + ADP + phosphate + CoA + H(+). Its function is as follows. Catalyzes the formation of N(4)-acetylcytidine (ac(4)C) at the wobble position of tRNA(Met), by using acetyl-CoA as an acetyl donor and ATP (or GTP). The sequence is that of tRNA(Met) cytidine acetyltransferase TmcA from Salmonella typhimurium (strain LT2 / SGSC1412 / ATCC 700720).